The primary structure comprises 531 residues: Cation transporter HKT1;3 (531 aa).

At 1–46 (MNHCLVVSHKKLQTFRTFAASKFSSFTKSAQKSIKYSFQFIYQNNP) the chain is on the cytoplasmic side. The next 2 helical transmembrane spans lie at 47-67 (LFVHVAYFALISFAGYGSLKV) and 108-128 (LWVLTILMLIGGEVFTSMLGI). The Cytoplasmic portion of the chain corresponds to 129–190 (HFMRAEFGTK…GGHVEPKTIK (62 aa)). 2 helical membrane passes run 191–211 (FLGFVVMGYLLITNLGGSLLI) and 264–284 (ILLLLILPQILAGNTLFAPCL). At 285–321 (RLMVWSLEKITGKKDCRYILEYPKAIGYKHLMSTRES) the chain is on the cytoplasmic side. The next 2 membrane-spanning stretches (helical) occupy residues 322–342 (VYLTLTVVSLIILQTVLFLSL) and 383–403 (SAILVLYTIMMYLPGYTSFLP). At 404–421 (RHDGEDSKTEKINKRKGL) the chain is on the cytoplasmic side. 2 consecutive transmembrane segments (helical) span residues 422–442 (LENWIFSHMSYLAIFVMLICI) and 494–514 (YGFAGKWSDNGKAILIIVMLF). The Cytoplasmic portion of the chain corresponds to 515 to 530 (GRLKTFNMKGGRAWKL).

It belongs to the TrkH potassium transport family. HKT (TC 2.A.38.3) subfamily. In terms of assembly, interacts with CNIH1. In terms of tissue distribution, weakly expressed. In roots, expressed in epidermis, exodermis, cortex, and sieve elements and companion cells of phloem. In mature leaves, expressed in large highly vacuolated cells of the adaxial epidermis, phloem and xylem.

It is found in the endoplasmic reticulum membrane. The protein resides in the golgi apparatus membrane. It catalyses the reaction Na(+)(in) = Na(+)(out). Functions as a highly-selective sodium transporter. Does not seem to function as sodium-potassium cotransporter. May be involved in turgor changes for rolling and unrolling of leaves in response to environmental variations. The polypeptide is Cation transporter HKT1;3 (Oryza sativa subsp. japonica (Rice)).